The primary structure comprises 147 residues: SsrA-binding protein (147 aa).

The segment at 124–147 (KKHDKRQDIKDRDWARKQARQDFS) is disordered. A compositionally biased stretch (basic and acidic residues) spans 128-147 (KRQDIKDRDWARKQARQDFS).

It belongs to the SmpB family.

It is found in the cytoplasm. In terms of biological role, required for rescue of stalled ribosomes mediated by trans-translation. Binds to transfer-messenger RNA (tmRNA), required for stable association of tmRNA with ribosomes. tmRNA and SmpB together mimic tRNA shape, replacing the anticodon stem-loop with SmpB. tmRNA is encoded by the ssrA gene; the 2 termini fold to resemble tRNA(Ala) and it encodes a 'tag peptide', a short internal open reading frame. During trans-translation Ala-aminoacylated tmRNA acts like a tRNA, entering the A-site of stalled ribosomes, displacing the stalled mRNA. The ribosome then switches to translate the ORF on the tmRNA; the nascent peptide is terminated with the 'tag peptide' encoded by the tmRNA and targeted for degradation. The ribosome is freed to recommence translation, which seems to be the essential function of trans-translation. The chain is SsrA-binding protein from Neorickettsia sennetsu (strain ATCC VR-367 / Miyayama) (Ehrlichia sennetsu).